A 477-amino-acid chain; its full sequence is Membrane-bound lytic murein transglycosylase F (477 aa).

A signal peptide spans 1–22; it reads MTRFLLIIILGFLLTACQQVTV. Residues 23–257 form a non-LT domain region; the sequence is DEPEFVPHQL…HLNEKYFGHV (235 aa). The tract at residues 258–477 is LT domain; it reads KRFDYIDTRA…AGSLSPDQPK (220 aa). Glu302 is an active-site residue. The tract at residues 446 to 477 is disordered; it reads SKQPMPEDEQNDLIAEELPSMPAGSLSPDQPK. A compositionally biased stretch (acidic residues) spans 451 to 460; the sequence is PEDEQNDLIA.

This sequence in the N-terminal section; belongs to the bacterial solute-binding protein 3 family. In the C-terminal section; belongs to the transglycosylase Slt family.

It is found in the cell outer membrane. The enzyme catalyses Exolytic cleavage of the (1-&gt;4)-beta-glycosidic linkage between N-acetylmuramic acid (MurNAc) and N-acetylglucosamine (GlcNAc) residues in peptidoglycan, from either the reducing or the non-reducing ends of the peptidoglycan chains, with concomitant formation of a 1,6-anhydrobond in the MurNAc residue.. Functionally, murein-degrading enzyme that degrades murein glycan strands and insoluble, high-molecular weight murein sacculi, with the concomitant formation of a 1,6-anhydromuramoyl product. Lytic transglycosylases (LTs) play an integral role in the metabolism of the peptidoglycan (PG) sacculus. Their lytic action creates space within the PG sacculus to allow for its expansion as well as for the insertion of various structures such as secretion systems and flagella. This Shewanella sp. (strain W3-18-1) protein is Membrane-bound lytic murein transglycosylase F.